We begin with the raw amino-acid sequence, 490 residues long: Transcriptional regulator FleQ (490 aa).

A 3',3'-c-di-GMP-binding site is contributed by Leu142. ADP is bound by residues Val147 and 177–182 (GTGKEV). 3',3'-c-di-GMP contacts are provided by residues 186 to 189 (NLHY) and 330 to 341 (ELISRMEHEKRG). 2 residues coordinate ADP: Arg334 and Arg363.

In terms of assembly, forms homodimers. Forms homohexamers that inhibit transcription initiation. Interacts with FleN; this complex is formed in the presence as well as in the absence of c-di-GMP or ATP.

With respect to regulation, C-di-GMP interaction leads to active site obstruction, hexameric ring destabilization thus relieving DNA bending and activating gene transcription. Its function is as follows. AAA+ ATPase enhancer-binding protein that acts as a transcription regulator and plays a role in the modulation of mucin adhesion and flagellar gene expression. In addition to flagella genes, also regulates expression of biofilm-related genes. Functions as a transcriptional repressor in the absence of c-di-GMP and as an activator when c-di-GMP is present. This chain is Transcriptional regulator FleQ, found in Pseudomonas aeruginosa (strain ATCC 15692 / DSM 22644 / CIP 104116 / JCM 14847 / LMG 12228 / 1C / PRS 101 / PAO1).